Reading from the N-terminus, the 401-residue chain is Dual-specificity RNA methyltransferase RlmN (401 aa).

Glutamate 114 serves as the catalytic Proton acceptor. In terms of domain architecture, Radical SAM core spans 120-365; the sequence is DKGRGTLCVS…TIVRRTRGDD (246 aa). A disulfide bridge links cysteine 127 with cysteine 370. Positions 134, 138, and 141 each coordinate [4Fe-4S] cluster. S-adenosyl-L-methionine contacts are provided by residues 187 to 188, serine 219, 241 to 243, and asparagine 327; these read GE and SLH. Cysteine 370 functions as the S-methylcysteine intermediate in the catalytic mechanism.

It belongs to the radical SAM superfamily. RlmN family. The cofactor is [4Fe-4S] cluster.

It is found in the cytoplasm. The enzyme catalyses adenosine(2503) in 23S rRNA + 2 reduced [2Fe-2S]-[ferredoxin] + 2 S-adenosyl-L-methionine = 2-methyladenosine(2503) in 23S rRNA + 5'-deoxyadenosine + L-methionine + 2 oxidized [2Fe-2S]-[ferredoxin] + S-adenosyl-L-homocysteine. It catalyses the reaction adenosine(37) in tRNA + 2 reduced [2Fe-2S]-[ferredoxin] + 2 S-adenosyl-L-methionine = 2-methyladenosine(37) in tRNA + 5'-deoxyadenosine + L-methionine + 2 oxidized [2Fe-2S]-[ferredoxin] + S-adenosyl-L-homocysteine. Functionally, specifically methylates position 2 of adenine 2503 in 23S rRNA and position 2 of adenine 37 in tRNAs. m2A2503 modification seems to play a crucial role in the proofreading step occurring at the peptidyl transferase center and thus would serve to optimize ribosomal fidelity. This is Dual-specificity RNA methyltransferase RlmN from Xanthomonas oryzae pv. oryzae (strain MAFF 311018).